We begin with the raw amino-acid sequence, 498 residues long: ATP synthase subunit beta, chloroplastic (498 aa).

172–179 (GGAGVGKT) provides a ligand contact to ATP.

Belongs to the ATPase alpha/beta chains family. As to quaternary structure, F-type ATPases have 2 components, CF(1) - the catalytic core - and CF(0) - the membrane proton channel. CF(1) has five subunits: alpha(3), beta(3), gamma(1), delta(1), epsilon(1). CF(0) has four main subunits: a(1), b(1), b'(1) and c(9-12).

It is found in the plastid. Its subcellular location is the chloroplast thylakoid membrane. The catalysed reaction is ATP + H2O + 4 H(+)(in) = ADP + phosphate + 5 H(+)(out). In terms of biological role, produces ATP from ADP in the presence of a proton gradient across the membrane. The catalytic sites are hosted primarily by the beta subunits. The polypeptide is ATP synthase subunit beta, chloroplastic (Idiospermum australiense (Ribbonwood tree)).